The primary structure comprises 155 residues: Ribonuclease H (155 aa).

One can recognise an RNase H type-1 domain in the interval 1–142 (MLKQVEIFTD…CDELARAAAM (142 aa)). Mg(2+) contacts are provided by Asp10, Glu48, Asp70, and Asp134.

It belongs to the RNase H family. As to quaternary structure, monomer. Mg(2+) is required as a cofactor.

The protein localises to the cytoplasm. It carries out the reaction Endonucleolytic cleavage to 5'-phosphomonoester.. Endonuclease that specifically degrades the RNA of RNA-DNA hybrids. The chain is Ribonuclease H from Salmonella paratyphi A (strain AKU_12601).